Consider the following 288-residue polypeptide: NADPH-dependent aldehyde reductase 1, chloroplastic (288 aa).

Residues 1–18 (MASEKQKQHAQPGKEHVM) are compositionally biased toward basic and acidic residues. Residues 1-32 (MASEKQKQHAQPGKEHVMESSPQFSSSDYQPS) are disordered. The segment covering 20–32 (SSPQFSSSDYQPS) has biased composition (polar residues). 47–71 (SGIGRAVGYCFASEGATVAFTYVKG) is an NADP(+) binding site. Ser-179 contributes to the substrate binding site. Tyr-192 (proton acceptor) is an active-site residue.

It belongs to the short-chain dehydrogenases/reductases (SDR) family.

It localises to the plastid. The protein localises to the chloroplast. In terms of biological role, aldehyde reductase that catalyzes the reduction of the aldehyde carbonyl groups on saturated and alpha,beta-unsaturated aldehydes with more than 5 carbons. No activity on alpha,beta-unsaturated ketones. Can use propionaldehyde, butyraldehyde, methylglyoxal, (e)-2-pentenal, (E)-2-hexenal, (Z)-3-hexenal and (E)-2-nonenal as substrates, but not propenal (acrolein), crotonaldehyde, 2-butanone, 3-buten-2-one or 1-penten-3-one. May act as a short alcohol-polyol-sugar dehydrogenase possibly related to carbohydrate metabolism and the acquisition of desiccation tolerance. May also be involved in signal transduction. This is NADPH-dependent aldehyde reductase 1, chloroplastic from Arabidopsis thaliana (Mouse-ear cress).